We begin with the raw amino-acid sequence, 331 residues long: 6-phosphogluconolactonase (331 aa).

At lysine 287 the chain carries N6-acetyllysine.

This sequence belongs to the cycloisomerase 2 family.

It catalyses the reaction 6-phospho-D-glucono-1,5-lactone + H2O = 6-phospho-D-gluconate + H(+). Its pathway is carbohydrate degradation; pentose phosphate pathway; D-ribulose 5-phosphate from D-glucose 6-phosphate (oxidative stage): step 2/3. In terms of biological role, catalyzes the hydrolysis of 6-phosphogluconolactone to 6-phosphogluconate. This Escherichia coli O7:K1 (strain IAI39 / ExPEC) protein is 6-phosphogluconolactonase.